Consider the following 526-residue polypeptide: Osmo-independent choline transporter BetT1 (526 aa).

Topologically, residues 1 to 17 (MWSKRDEQKTYPPIRLN) are cytoplasmic. Residues 18-38 (PFVFWSSAISISIFGMLFVLF) form a helical membrane-spanning segment. Residues 39–56 (PETSQHGLTWIQQQVNQL) are Periplasmic-facing. A helical transmembrane segment spans residues 57-77 (FGWYYMLVIILSLGFVAWLAF). The Cytoplasmic segment spans residues 78–93 (SQVGNIPLGKAQDKPE). The helical transmembrane segment at 94–114 (FGYLVWTSMLFSAGIGIALLY) threads the bilayer. The Periplasmic portion of the chain corresponds to 115-148 (YGVAEPVDHFLRPPEGQGGTVEAAQNAMMYSFLH). A helical transmembrane segment spans residues 149 to 169 (WGIHGWVLYALVGVTLGYFAF). Topologically, residues 170–200 (RRDLPLALRSALYPIFGERIHGLVGHMVDGF) are cytoplasmic. The chain crosses the membrane as a helical span at residues 201–221 (GILATIISLVTNLGIGALVMI). The Periplasmic segment spans residues 222-236 (SGISYLFPDLPNTSS). The helical transmembrane segment at 237–257 (TLVVTVIMMMLVATLTTVIGI) threads the bilayer. Topologically, residues 258–272 (EKGLAWLSRINLRLL) are cytoplasmic. Residues 273-293 (YLLLLFVFLTGPTNHLLNGLV) form a helical membrane-spanning segment. The Periplasmic segment spans residues 294-323 (QNTGDYLSHFVQKSFDLYLYDKNATGWLAS). The helical transmembrane segment at 324–344 (WTIFYWAWWIAWAPFVGMFIA) threads the bilayer. Over 345–354 (RISKGRTIRE) the chain is Cytoplasmic. A helical transmembrane segment spans residues 355–375 (VVLGVCLIPLGFTLAWISIFG). At 376–417 (NTAIDLILNHGQQIIGSLVIQDPALSLFKLLEYLPFHPYVAG) the chain is on the periplasmic side. The chain crosses the membrane as a helical span at residues 418–438 (IVVVICFVLFLTPVGSGTLMI). Residues 439 to 457 (ANLSSQGGSSDSDSPIWLR) lie on the Cytoplasmic side of the membrane. The chain crosses the membrane as a helical span at residues 458–478 (VFWSIAITIVSIGLLLAGSFS). Over 479-482 (AMQS) the chain is Periplasmic. A helical transmembrane segment spans residues 483-503 (AVVLCGLPFSVILLLYMFGLA). Over 504-526 (KALKQETQQPVVESHTTETSGSD) the chain is Cytoplasmic.

The protein belongs to the BCCT transporter (TC 2.A.15) family.

The protein resides in the cell inner membrane. Sodium-independent high-affinity choline uptake system. Uptake is not proton coupled. May play a role in metabolic adaptation to choline-containing environments. This chain is Osmo-independent choline transporter BetT1, found in Acinetobacter baylyi (strain ATCC 33305 / BD413 / ADP1).